We begin with the raw amino-acid sequence, 816 residues long: Sucrose synthase 2 (816 aa).

Positions 280–757 (MVLNVVILSP…GLQRIEEKYT (478 aa)) are GT-B glycosyltransferase.

The protein belongs to the glycosyltransferase 1 family. Plant sucrose synthase subfamily. As to quaternary structure, forms homotetramers and heterotetramers with SS1, all three possible heterotetramers are formed. Abundant in developing endosperm, low in aleurone, and undetected in coleoptiles and roots. Also detected in crude extracts of anthers and in immature embryos.

The catalysed reaction is an NDP-alpha-D-glucose + D-fructose = a ribonucleoside 5'-diphosphate + sucrose + H(+). In terms of biological role, sucrose-cleaving enzyme that provides UDP-glucose and fructose for various metabolic pathways. In Hordeum vulgare (Barley), this protein is Sucrose synthase 2 (SS2).